A 547-amino-acid polypeptide reads, in one-letter code: Undecaprenyl phosphate-alpha-4-amino-4-deoxy-L-arabinose arabinosyl transferase (547 aa).

10 consecutive transmembrane segments (helical) span residues 83 to 103 (FASA…ALQL), 111 to 131 (FLAS…TYSV), 174 to 194 (FLTK…PYVI), 205 to 225 (FGPL…IAVH), 253 to 273 (APFW…LGLL), 286 to 306 (ISPE…FFSI), 311 to 331 (LLTY…ANAV), 346 to 366 (AWLN…LAFS), 378 to 398 (GALA…FIQL), and 408 to 428 (SALC…QSLI).

This sequence belongs to the glycosyltransferase 83 family.

It is found in the cell inner membrane. The enzyme catalyses 4-amino-4-deoxy-alpha-L-arabinopyranosyl di-trans,octa-cis-undecaprenyl phosphate + lipid IVA = lipid IIA + di-trans,octa-cis-undecaprenyl phosphate.. Its pathway is lipopolysaccharide metabolism; 4-amino-4-deoxy-beta-L-arabinose-lipid A biosynthesis. Its function is as follows. Catalyzes the transfer of the L-Ara4N moiety of the glycolipid undecaprenyl phosphate-alpha-L-Ara4N to lipid A. The modified arabinose is attached to lipid A and is required for resistance to polymyxin and cationic antimicrobial peptides. This is Undecaprenyl phosphate-alpha-4-amino-4-deoxy-L-arabinose arabinosyl transferase from Aeromonas hydrophila subsp. hydrophila (strain ATCC 7966 / DSM 30187 / BCRC 13018 / CCUG 14551 / JCM 1027 / KCTC 2358 / NCIMB 9240 / NCTC 8049).